The following is a 366-amino-acid chain: MTSLSEFVSEPIGMMSQTSAASESQCYYNETIAFFYNRSGKYLDTEWNAVSKLVMGLGITVCIFIMLANLLVMVAIYVNRRFHFPIYYLMANLAAADFFAGLAYFYLMFNTGPNTRRLTVSTWLLRQGLIDTSLTASVANLLAIAIERHITVFRMQLHTRMSNRRVVVVIVVIWTVAIVMGAIPSVGWNCICDLEHCSNMAPLYSDSYLIFWTIFNLVTFVVMVVLYAHIFVYVRQRTMRMSRHSSGPRRNRDTMMSLLKTVVIVLGAFIVCWTPGLVLLLLDVCCPQCNILAYEKFFLLLAEFNSAMNPIIYSYRDKEMSATFKQILCCQRTENVNGPTEGSDRSASSLNHTILAGVHSNDHSVV.

Topologically, residues 1-52 (MTSLSEFVSEPIGMMSQTSAASESQCYYNETIAFFYNRSGKYLDTEWNAVSK) are extracellular. 2 disulfide bridges follow: Cys26–Cys192 and Cys190–Cys197. 2 N-linked (GlcNAc...) asparagine glycosylation sites follow: Asn29 and Asn37. Lys41 provides a ligand contact to a 1-acyl-sn-glycero-3-phosphate. A helical transmembrane segment spans residues 53 to 77 (LVMGLGITVCIFIMLANLLVMVAIY). Residues 78–85 (VNRRFHFP) are Cytoplasmic-facing. A helical transmembrane segment spans residues 86 to 109 (IYYLMANLAAADFFAGLAYFYLMF). The Extracellular portion of the chain corresponds to 110-123 (NTGPNTRRLTVSTW). Residues 124-146 (LLRQGLIDTSLTASVANLLAIAI) form a helical membrane-spanning segment. 126 to 131 (RQGLID) is an a 1-acyl-sn-glycero-3-phosphate binding site. At 147-165 (ERHITVFRMQLHTRMSNRR) the chain is on the cytoplasmic side. A helical transmembrane segment spans residues 166 to 186 (VVVVIVVIWTVAIVMGAIPSV). At 187–206 (GWNCICDLEHCSNMAPLYSD) the chain is on the extracellular side. Residues 207–227 (SYLIFWTIFNLVTFVVMVVLY) traverse the membrane as a helical segment. Trp212 serves as a coordination point for a 1-acyl-sn-glycero-3-phosphate. Over 228–257 (AHIFVYVRQRTMRMSRHSSGPRRNRDTMMS) the chain is Cytoplasmic. Residues 258-282 (LLKTVVIVLGAFIVCWTPGLVLLLL) traverse the membrane as a helical segment. Residues 283–296 (DVCCPQCNILAYEK) are Extracellular-facing. Cys286 and Cys289 form a disulfide bridge. A helical membrane pass occupies residues 297–317 (FFLLLAEFNSAMNPIIYSYRD). At 318–366 (KEMSATFKQILCCQRTENVNGPTEGSDRSASSLNHTILAGVHSNDHSVV) the chain is on the cytoplasmic side.

It belongs to the G-protein coupled receptor 1 family. As to expression, expressed at high levels in oocytes and at lower levels in brain and spinal cord. Below detection level in lung, heart, kidney, liver, muscle, stomach, and intestine.

It localises to the cell surface. The protein localises to the cell membrane. Its subcellular location is the endosome. Its function is as follows. Receptor for lysophosphatidic acid (LPA). Plays a role in the reorganization of the actin cytoskeleton, cell migration, differentiation and proliferation, and thereby contributes to the responses to tissue damage and infectious agents. Activates downstream signaling cascades via the G(i)/G(o), G(12)/G(13), and G(q) families of heteromeric G proteins. Signaling inhibits adenylyl cyclase activity and decreases cellular cAMP levels. Signaling triggers an increase of cytoplasmic Ca(2+) levels. Signaling leads to the activation of phospholipase C (PLC) and the formation of inositol 1,4,5-trisphosphate. Signaling mediates activation of down-stream MAP kinases. Contributes to the regulation of cell shape. Promotes Rho-dependent reorganization of the actin cytoskeleton in neuronal cells and neurite retraction. Promotes the activation of Rho and the formation of actin stress fibers. Promotes formation of lamellipodia at the leading edge of migrating cells via activation of Rac. Through its function as lysophosphatidic acid receptor, plays a role in chemotaxis and cell migration, including responses to injury and wounding. Promotes cell proliferation in response to lysophosphatidic acid. The polypeptide is Lysophosphatidic acid receptor 1-B (lpar1-b) (Xenopus laevis (African clawed frog)).